A 120-amino-acid polypeptide reads, in one-letter code: Large ribosomal subunit protein bL12 (120 aa).

It belongs to the bacterial ribosomal protein bL12 family. In terms of assembly, homodimer. Part of the ribosomal stalk of the 50S ribosomal subunit. Forms a multimeric L10(L12)X complex, where L10 forms an elongated spine to which 2 to 4 L12 dimers bind in a sequential fashion. Binds GTP-bound translation factors.

Its function is as follows. Forms part of the ribosomal stalk which helps the ribosome interact with GTP-bound translation factors. Is thus essential for accurate translation. In Listeria monocytogenes serovar 1/2a (strain ATCC BAA-679 / EGD-e), this protein is Large ribosomal subunit protein bL12.